The following is a 390-amino-acid chain: MTSTPTPTPTGALALADGSVFLGHGTGATGIALGEVCFNTAMTGHQEILADPSYAGQVVCFTFPHVGNVGANGEDEEAASPQARKAAVGMIARAKITPPASWRADTTFEEWLCTRGIVALTGIDTRALTRKIREGGMQMCAIAHDAAGNIDIEALKAAAAGAPTMEGRELAADVARTEGGDWTEGNWTLGEGYAVGPEDGPRVVVLDYGVKANILRLLTGAGARVAVLPGKASIDDIKALNPDGVVVSNGPGDPAETGKYALPTIKAVLDANIPTLGICLGHQMLALAIGAKTAKMPQGHHGANHPVKNHETGQVEIVSMNHGFAVDGTTLPANAAETHVSLFDGSNSGFKLTDKPVWAVQHHPEASPGPQDSFGVFDRFVGELKGRVEA.

Residues 1–198 (MTSTPTPTPT…LGEGYAVGPE (198 aa)) are CPSase. Residues Ser-53, Gly-250, and Gly-252 each contribute to the L-glutamine site. Residues 202–390 (RVVVLDYGVK…VGELKGRVEA (189 aa)) enclose the Glutamine amidotransferase type-1 domain. Cys-279 functions as the Nucleophile in the catalytic mechanism. The L-glutamine site is built by Leu-280, Gln-283, Asn-321, Gly-323, and Phe-324. Active-site residues include His-363 and Glu-365.

Belongs to the CarA family. Composed of two chains; the small (or glutamine) chain promotes the hydrolysis of glutamine to ammonia, which is used by the large (or ammonia) chain to synthesize carbamoyl phosphate. Tetramer of heterodimers (alpha,beta)4.

It catalyses the reaction hydrogencarbonate + L-glutamine + 2 ATP + H2O = carbamoyl phosphate + L-glutamate + 2 ADP + phosphate + 2 H(+). It carries out the reaction L-glutamine + H2O = L-glutamate + NH4(+). It functions in the pathway amino-acid biosynthesis; L-arginine biosynthesis; carbamoyl phosphate from bicarbonate: step 1/1. It participates in pyrimidine metabolism; UMP biosynthesis via de novo pathway; (S)-dihydroorotate from bicarbonate: step 1/3. In terms of biological role, small subunit of the glutamine-dependent carbamoyl phosphate synthetase (CPSase). CPSase catalyzes the formation of carbamoyl phosphate from the ammonia moiety of glutamine, carbonate, and phosphate donated by ATP, constituting the first step of 2 biosynthetic pathways, one leading to arginine and/or urea and the other to pyrimidine nucleotides. The small subunit (glutamine amidotransferase) binds and cleaves glutamine to supply the large subunit with the substrate ammonia. This is Carbamoyl phosphate synthase small chain from Maricaulis maris (strain MCS10) (Caulobacter maris).